The primary structure comprises 122 residues: Large ribosomal subunit protein uL14 (122 aa).

This sequence belongs to the universal ribosomal protein uL14 family. As to quaternary structure, part of the 50S ribosomal subunit. Forms a cluster with proteins L3 and L19. In the 70S ribosome, L14 and L19 interact and together make contacts with the 16S rRNA in bridges B5 and B8.

Its function is as follows. Binds to 23S rRNA. Forms part of two intersubunit bridges in the 70S ribosome. In Nostoc punctiforme (strain ATCC 29133 / PCC 73102), this protein is Large ribosomal subunit protein uL14.